Consider the following 237-residue polypeptide: tRNA(His) guanylyltransferase (237 aa).

Asp-29, Gly-30, and Asp-77 together coordinate Mg(2+). Residues 29 to 34 (DGKKFH) and 76 to 77 (SD) each bind GTP.

Belongs to the tRNA(His) guanylyltransferase family. Requires Mg(2+) as cofactor.

It catalyses the reaction a 5'-end ribonucleotide-tRNA(His) + GTP + ATP + H2O = a 5'-end phospho-guanosine-ribonucleotide-tRNA(His) + AMP + 2 diphosphate + H(+). Adds a GMP to the 5'-end of tRNA(His) after transcription and RNase P cleavage. The sequence is that of tRNA(His) guanylyltransferase (THG1) from Candida glabrata (strain ATCC 2001 / BCRC 20586 / JCM 3761 / NBRC 0622 / NRRL Y-65 / CBS 138) (Yeast).